Reading from the N-terminus, the 411-residue chain is CCA-adding enzyme (411 aa).

The ATP site is built by G8 and R11. CTP-binding residues include G8 and R11. 2 residues coordinate Mg(2+): E21 and D23. 3 residues coordinate ATP: R91, R137, and R140. Residues R91, R137, and R140 each coordinate CTP. Residues 227 to 328 form the HD domain; it reads LGNQTMTRLS…MTIFQAFDCW (102 aa).

The protein belongs to the tRNA nucleotidyltransferase/poly(A) polymerase family. Bacterial CCA-adding enzyme type 2 subfamily. Requires Mg(2+) as cofactor.

It catalyses the reaction a tRNA precursor + 2 CTP + ATP = a tRNA with a 3' CCA end + 3 diphosphate. The catalysed reaction is a tRNA with a 3' CCA end + 2 CTP + ATP = a tRNA with a 3' CCACCA end + 3 diphosphate. In terms of biological role, catalyzes the addition and repair of the essential 3'-terminal CCA sequence in tRNAs without using a nucleic acid template. Adds these three nucleotides in the order of C, C, and A to the tRNA nucleotide-73, using CTP and ATP as substrates and producing inorganic pyrophosphate. tRNA 3'-terminal CCA addition is required both for tRNA processing and repair. Also involved in tRNA surveillance by mediating tandem CCA addition to generate a CCACCA at the 3' terminus of unstable tRNAs. While stable tRNAs receive only 3'-terminal CCA, unstable tRNAs are marked with CCACCA and rapidly degraded. In Blochmanniella floridana, this protein is CCA-adding enzyme.